A 538-amino-acid polypeptide reads, in one-letter code: Phosphoenolpyruvate carboxykinase (ATP) (538 aa).

Arginine 61, tyrosine 195, and lysine 201 together coordinate substrate. Residues lysine 201, histidine 220, and glycine 236–threonine 244 each bind ATP. Mn(2+) contacts are provided by lysine 201 and histidine 220. Aspartate 257 serves as a coordination point for Mn(2+). Glutamate 285, arginine 323, and threonine 449 together coordinate ATP. Arginine 323 contributes to the substrate binding site.

This sequence belongs to the phosphoenolpyruvate carboxykinase (ATP) family. It depends on Mn(2+) as a cofactor.

It localises to the cytoplasm. The catalysed reaction is oxaloacetate + ATP = phosphoenolpyruvate + ADP + CO2. Its pathway is carbohydrate biosynthesis; gluconeogenesis. Involved in the gluconeogenesis. Catalyzes the conversion of oxaloacetate (OAA) to phosphoenolpyruvate (PEP) through direct phosphoryl transfer between the nucleoside triphosphate and OAA. The chain is Phosphoenolpyruvate carboxykinase (ATP) from Bradyrhizobium diazoefficiens (strain JCM 10833 / BCRC 13528 / IAM 13628 / NBRC 14792 / USDA 110).